An 82-amino-acid polypeptide reads, in one-letter code: Cytochrome c oxidase-assembly factor cox-23, mitochondrial (82 aa).

The interval 1–27 is disordered; it reads MAQAGSENKEPWNEETRAKFEGKSRSE. The span at 7-27 shows a compositional bias: basic and acidic residues; it reads ENKEPWNEETRAKFEGKSRSE. The CHCH domain occupies 29–71; that stretch reads LDPCQEAAQRSIRCLHRNQGDRTMCSDYFEAYRECKKQWIERR. 2 short sequence motifs (cx9C motif) span residues 32-42 and 53-63; these read CQEAAQRSIRC and CSDYFEAYREC. 2 disulfide bridges follow: cysteine 32–cysteine 63 and cysteine 42–cysteine 53.

This sequence belongs to the COX23 family.

It localises to the mitochondrion intermembrane space. Required for the assembly of cytochrome c oxidase. This is Cytochrome c oxidase-assembly factor cox-23, mitochondrial (cox-23) from Neurospora crassa (strain ATCC 24698 / 74-OR23-1A / CBS 708.71 / DSM 1257 / FGSC 987).